Consider the following 488-residue polypeptide: Glutamyl-tRNA(Gln) amidotransferase subunit A (488 aa).

Active-site charge relay system residues include Lys-77 and Ser-152. Residue Ser-176 is the Acyl-ester intermediate of the active site.

It belongs to the amidase family. GatA subfamily. As to quaternary structure, heterotrimer of A, B and C subunits.

The catalysed reaction is L-glutamyl-tRNA(Gln) + L-glutamine + ATP + H2O = L-glutaminyl-tRNA(Gln) + L-glutamate + ADP + phosphate + H(+). Functionally, allows the formation of correctly charged Gln-tRNA(Gln) through the transamidation of misacylated Glu-tRNA(Gln) in organisms which lack glutaminyl-tRNA synthetase. The reaction takes place in the presence of glutamine and ATP through an activated gamma-phospho-Glu-tRNA(Gln). The protein is Glutamyl-tRNA(Gln) amidotransferase subunit A of Streptococcus pyogenes serotype M1.